We begin with the raw amino-acid sequence, 208 residues long: MQFPDRLIQHFDSALRVMSGVSVAGRPNPAAKVADGDLDSAQRRHSAGLMRVNHVGEVCAQALYQAQAQFARSPAIRQQLLLAGREEEDHLAWTAERLRELGSRPSLLNPLWYAGAFALGTVAATLGDARSLGFVVETERQVEAHLNQHLSSLPPQDAKSLAIVKQMSTDEAEHGAAAHALGAQTVPPLAQMGMQAMAKVMTSTAYYL.

Fe cation contacts are provided by Glu-57, Glu-87, His-90, Glu-139, Glu-171, and His-174.

The protein belongs to the COQ7 family. It depends on Fe cation as a cofactor.

It is found in the cell membrane. The enzyme catalyses a 5-methoxy-2-methyl-3-(all-trans-polyprenyl)benzene-1,4-diol + AH2 + O2 = a 3-demethylubiquinol + A + H2O. It functions in the pathway cofactor biosynthesis; ubiquinone biosynthesis. Its function is as follows. Catalyzes the hydroxylation of 2-nonaprenyl-3-methyl-6-methoxy-1,4-benzoquinol during ubiquinone biosynthesis. This chain is 3-demethoxyubiquinol 3-hydroxylase, found in Janthinobacterium sp. (strain Marseille) (Minibacterium massiliensis).